A 457-amino-acid polypeptide reads, in one-letter code: Argininosuccinate lyase (457 aa).

It belongs to the lyase 1 family. Argininosuccinate lyase subfamily.

The protein localises to the cytoplasm. The catalysed reaction is 2-(N(omega)-L-arginino)succinate = fumarate + L-arginine. It participates in amino-acid biosynthesis; L-arginine biosynthesis; L-arginine from L-ornithine and carbamoyl phosphate: step 3/3. The polypeptide is Argininosuccinate lyase (Psychrobacter arcticus (strain DSM 17307 / VKM B-2377 / 273-4)).